We begin with the raw amino-acid sequence, 382 residues long: Lipid-A-disaccharide synthase (382 aa).

This sequence belongs to the LpxB family.

The enzyme catalyses 2-N,3-O-bis[(3R)-3-hydroxytetradecanoyl]-alpha-D-glucosaminyl 1-phosphate + UDP-2-N,3-O-bis[(3R)-3-hydroxytetradecanoyl]-alpha-D-glucosamine = lipid A disaccharide (E. coli) + UDP + H(+). The catalysed reaction is a lipid X + a UDP-2-N,3-O-bis[(3R)-3-hydroxyacyl]-alpha-D-glucosamine = a lipid A disaccharide + UDP + H(+). The protein operates within glycolipid biosynthesis; lipid IV(A) biosynthesis; lipid IV(A) from (3R)-3-hydroxytetradecanoyl-[acyl-carrier-protein] and UDP-N-acetyl-alpha-D-glucosamine: step 5/6. Functionally, condensation of UDP-2,3-diacylglucosamine and 2,3-diacylglucosamine-1-phosphate to form lipid A disaccharide, a precursor of lipid A, a phosphorylated glycolipid that anchors the lipopolysaccharide to the outer membrane of the cell. In Escherichia coli O17:K52:H18 (strain UMN026 / ExPEC), this protein is Lipid-A-disaccharide synthase.